The following is a 430-amino-acid chain: Probable acetate kinase (430 aa).

Asn12 is a Mg(2+) binding site. Lys19 contacts ATP. Arg100 is a substrate binding site. The active-site Proton donor/acceptor is the Asp159. 220-224 is an ATP binding site; sequence HLGSG. A Mg(2+)-binding site is contributed by Glu416.

It belongs to the acetokinase family. Mg(2+) is required as a cofactor.

The enzyme catalyses acetate + ATP = acetyl phosphate + ADP. The protein operates within metabolic intermediate biosynthesis; acetyl-CoA biosynthesis; acetyl-CoA from acetate: step 1/2. This is Probable acetate kinase from Cryptococcus neoformans var. neoformans serotype D (strain B-3501A) (Filobasidiella neoformans).